The primary structure comprises 230 residues: Demethylmenaquinone methyltransferase (230 aa).

Residues Thr62, Asp80, Asp100–Ala101, and Ser117 each bind S-adenosyl-L-methionine.

The protein belongs to the class I-like SAM-binding methyltransferase superfamily. MenG/UbiE family.

The catalysed reaction is a 2-demethylmenaquinol + S-adenosyl-L-methionine = a menaquinol + S-adenosyl-L-homocysteine + H(+). It participates in quinol/quinone metabolism; menaquinone biosynthesis; menaquinol from 1,4-dihydroxy-2-naphthoate: step 2/2. In terms of biological role, methyltransferase required for the conversion of demethylmenaquinol (DMKH2) to menaquinol (MKH2). The polypeptide is Demethylmenaquinone methyltransferase (Mycobacterium sp. (strain JLS)).